The sequence spans 418 residues: Tyrosine--tRNA ligase (418 aa).

The 'HIGH' region motif lies at 42–51; that stretch reads PTAPDLHLGH. The short motif at 226 to 230 is the 'KMSKS' region element; that stretch reads KMSKS. Lysine 229 is an ATP binding site. The S4 RNA-binding domain maps to 339–400; sequence VRLVALLTKS…GKRNFAKVRL (62 aa).

Belongs to the class-I aminoacyl-tRNA synthetase family. TyrS type 2 subfamily. Homodimer.

It localises to the cytoplasm. It catalyses the reaction tRNA(Tyr) + L-tyrosine + ATP = L-tyrosyl-tRNA(Tyr) + AMP + diphosphate + H(+). Functionally, catalyzes the attachment of tyrosine to tRNA(Tyr) in a two-step reaction: tyrosine is first activated by ATP to form Tyr-AMP and then transferred to the acceptor end of tRNA(Tyr). The protein is Tyrosine--tRNA ligase of Xylella fastidiosa (strain 9a5c).